The sequence spans 430 residues: MLYEKFEYNINNLIGNFGLSKIAAAVSGGSDSVALLYLANIWAEKNNIELSVISVDHNLREQSKQETHYIQNISNSLNRKHYSLSFDHQNNFSNLQERAREGRYDLMTNLCLELDILVLLTAHHEDDYVENFCLRLERNSGIFGLSSSNINWYNNIQIIRPLYNIPKSELVEYLVSHNIKWFEDESNSSDKYRRNIIRQKLAKGEDYIKADIILQQLKINDLLDNKFKPELISAIAEAVKIFEYGFAFLDLVKFDKFSNEVKVQIINFLLIIISGQFRAARFYSVEPILKLITQDVNFKNTLHGCVINRIQNELLIYREFGKKLPESKILLDKSVIWDNRFRITRNQETPNCFVTHLSLEDYKMIKKQLDLEPLKNLSCKNHNAIIFTLPIIKILEKVIAIPHISYYDNDMWNFEVSFAPNFVSRFTHFC.

27–32 (SGGSDS) serves as a coordination point for ATP.

It belongs to the tRNA(Ile)-lysidine synthase family.

The protein localises to the cytoplasm. The catalysed reaction is cytidine(34) in tRNA(Ile2) + L-lysine + ATP = lysidine(34) in tRNA(Ile2) + AMP + diphosphate + H(+). Functionally, ligates lysine onto the cytidine present at position 34 of the AUA codon-specific tRNA(Ile) that contains the anticodon CAU, in an ATP-dependent manner. Cytidine is converted to lysidine, thus changing the amino acid specificity of the tRNA from methionine to isoleucine. This Rickettsia felis (strain ATCC VR-1525 / URRWXCal2) (Rickettsia azadi) protein is tRNA(Ile)-lysidine synthase.